The following is an 87-amino-acid chain: U1-theraphotoxin-Ct1a (87 aa).

An N-terminal signal peptide occupies residues 1-23 (MKTFTLIAILTCAVLVIFHAAAA). A propeptide spanning residues 24-48 (EELEVQDVIQPEDTLTGLATLDEDR) is cleaved from the precursor.

Belongs to the neurotoxin 12 (Hwtx-2) family. 03 (juruin) subfamily. Post-translationally, contains 3 disulfide bonds. Two different connectivities are observed in similar proteins (C1-C3, C2-C5, C4-C6 or C1-C4, C2-C5, C3-C6). In terms of tissue distribution, expressed by the venom gland.

The protein localises to the secreted. This toxin causes paralysis and death to sheep blowflies. It may inhibit voltage-gated calcium channels. In Coremiocnemis tropix (Australian tarantula spider), this protein is U1-theraphotoxin-Ct1a.